The chain runs to 845 residues: MKRKSSHYNDAHASHINEDIEESYKDLYNNLSPSSTILLLLYARWFPATLIHFLDKYYTSTPILIDMIHKQCIYNPPKGSLHVQLEYYLAFLNRMALIFDRFPDLFPTEISKVKFFTKDFSKKDKLTALDTYRSFPGSTWKTIVTFATQEVFYLPEGLEPLKRDFSSMDKLKLIGKITYKLRLKGDTALKFAYLHAPSDVRDKVFDDAFWQEIITPKASLEQQSNNIPTGIQDSSKYTVNGPTERDNKSMKSFVRSFFTSTDSSVADTTIIPSMTQQFDKDPSTLVQSSIDKEIQVKEDGTTSSVAVNAETAVQNVNGTIKESQGTESISFASKNNSAPSADANNGNMTKLVSKEKAFLNTVTTPNADLIISEEDELTEMTLRTANGSEPTKKSNRSEQSKTVANTNVGSKNGTTPRSFAQKSSKRIKPTEGSANLNTVTELTGIGSRIAMNGSSVKASNISTEKSKTIAKPKPAKELSPQATLNSPIQSAEAGNVELKLHPQTPDRIVKVERKVHSLNMTLRSPKAGSAGKENSWRSKYLSEGKNSKAKYTAKQPSYDRAGSSLASPTKSSASPLVKAPKETPERLCTENQSTENEDQANLKESELPKEKSDIQPKNSRSTIEYIETSTRVYEMPKDTIPSRFKTSISTEVHDGRLKKYPYYHVKTPEKGTTVVSRTVTSPKSGAYASPSKASYNQDSSPNASLEQCFVQRSPSKMLTTLRNNSSTFPSLRKNAMIARKSTADSLSSPKRQSVPSTPKASLSPRVHKSMTYSPSEASPLYANKSPKSSTMVPLMKYKSGLNEGMRTSSIYSSTSSPYIRDQYFLNRMLTNGSHNGSPSWRDGLL.

Residues 224 to 241 show a composition bias toward polar residues; the sequence is SNNIPTGIQDSSKYTVNG. 7 disordered regions span residues 224-244, 324-346, 383-434, 456-485, 519-619, 674-701, and 739-785; these read SNNIPTGIQDSSKYTVNGPTE, QGTESISFASKNNSAPSADANNG, RTAN…EGSA, VKASNISTEKSKTIAKPKPAKELSPQATLN, NMTL…PKNS, VVSRTVTSPKSGAYASPSKASYNQDSSP, and RKST…ANKS. The span at 390-399 shows a compositional bias: basic and acidic residues; the sequence is PTKKSNRSEQ. The segment covering 400–422 has biased composition (polar residues); that stretch reads SKTVANTNVGSKNGTTPRSFAQK. Positions 534–546 are enriched in basic and acidic residues; that stretch reads NSWRSKYLSEGKN. A compositionally biased stretch (low complexity) spans 563 to 576; it reads SSLASPTKSSASPL. Ser567 is subject to Phosphoserine. 2 stretches are compositionally biased toward basic and acidic residues: residues 579–588 and 600–614; these read APKETPERLC and ANLKESELPKEKSDI. 3 stretches are compositionally biased toward polar residues: residues 674–683, 691–701, and 743–760; these read VVSRTVTSPK, SKASYNQDSSP, and ADSLSSPKRQSVPSTPKA.

It is found in the mitochondrion. This is an uncharacterized protein from Schizosaccharomyces pombe (strain 972 / ATCC 24843) (Fission yeast).